The chain runs to 265 residues: Phosphonates import ATP-binding protein PhnC 1 (265 aa).

One can recognise an ABC transporter domain in the interval Leu-3–Gln-247. Gly-36–Thr-43 lines the ATP pocket.

The protein belongs to the ABC transporter superfamily. Phosphonates importer (TC 3.A.1.9.1) family. The complex is composed of two ATP-binding proteins (PhnC), two transmembrane proteins (PhnE) and a solute-binding protein (PhnD).

It localises to the cell inner membrane. The enzyme catalyses phosphonate(out) + ATP + H2O = phosphonate(in) + ADP + phosphate + H(+). Its function is as follows. Part of the ABC transporter complex PhnCDE involved in phosphonates import. Responsible for energy coupling to the transport system. The sequence is that of Phosphonates import ATP-binding protein PhnC 1 from Pseudomonas syringae pv. syringae (strain B728a).